Consider the following 300-residue polypeptide: tRNA dimethylallyltransferase (300 aa).

11–18 (GPTAVGKS) is a binding site for ATP. Residue 13 to 18 (TAVGKS) participates in substrate binding. The interaction with substrate tRNA stretch occupies residues 35 to 38 (DSIQ).

It belongs to the IPP transferase family. In terms of assembly, monomer. It depends on Mg(2+) as a cofactor.

The catalysed reaction is adenosine(37) in tRNA + dimethylallyl diphosphate = N(6)-dimethylallyladenosine(37) in tRNA + diphosphate. Catalyzes the transfer of a dimethylallyl group onto the adenine at position 37 in tRNAs that read codons beginning with uridine, leading to the formation of N6-(dimethylallyl)adenosine (i(6)A). The polypeptide is tRNA dimethylallyltransferase (Borreliella afzelii (strain PKo) (Borrelia afzelii)).